The chain runs to 397 residues: Acetate kinase (397 aa).

A Mg(2+)-binding site is contributed by Asn-8. Lys-15 serves as a coordination point for ATP. Arg-89 is a substrate binding site. Catalysis depends on Asp-146, which acts as the Proton donor/acceptor. ATP contacts are provided by residues 206–210 (HLGNG), 281–283 (DLR), and 329–333 (GVGEN). Mg(2+) is bound at residue Glu-382.

This sequence belongs to the acetokinase family. As to quaternary structure, homodimer. Mg(2+) serves as cofactor. Requires Mn(2+) as cofactor.

It localises to the cytoplasm. The enzyme catalyses acetate + ATP = acetyl phosphate + ADP. Its pathway is metabolic intermediate biosynthesis; acetyl-CoA biosynthesis; acetyl-CoA from acetate: step 1/2. In terms of biological role, catalyzes the formation of acetyl phosphate from acetate and ATP. Can also catalyze the reverse reaction. The sequence is that of Acetate kinase from Bacillus mycoides (strain KBAB4) (Bacillus weihenstephanensis).